A 101-amino-acid polypeptide reads, in one-letter code: MAEKTLTRMDLSDAVFREVGLSRNESAQLVESILTHMSDALVRGESVKISSFGTFSVRDKSARIGRNPKTGEEVPIHPRRVLTFRPSHLMKERVANGNRNR.

It belongs to the bacterial histone-like protein family. In terms of assembly, heterodimer of an alpha and a beta chain.

Functionally, this protein is one of the two subunits of integration host factor, a specific DNA-binding protein that functions in genetic recombination as well as in transcriptional and translational control. The protein is Integration host factor subunit alpha of Dinoroseobacter shibae (strain DSM 16493 / NCIMB 14021 / DFL 12).